The following is a 288-amino-acid chain: Bifunctional protein FolD 1 (288 aa).

Residues 170 to 172 and Ile-236 each bind NADP(+); that span reads GPG.

It belongs to the tetrahydrofolate dehydrogenase/cyclohydrolase family. Homodimer.

It carries out the reaction (6R)-5,10-methylene-5,6,7,8-tetrahydrofolate + NADP(+) = (6R)-5,10-methenyltetrahydrofolate + NADPH. It catalyses the reaction (6R)-5,10-methenyltetrahydrofolate + H2O = (6R)-10-formyltetrahydrofolate + H(+). The protein operates within one-carbon metabolism; tetrahydrofolate interconversion. Catalyzes the oxidation of 5,10-methylenetetrahydrofolate to 5,10-methenyltetrahydrofolate and then the hydrolysis of 5,10-methenyltetrahydrofolate to 10-formyltetrahydrofolate. The protein is Bifunctional protein FolD 1 of Deinococcus geothermalis (strain DSM 11300 / CIP 105573 / AG-3a).